The following is a 154-amino-acid chain: Large ribosomal subunit protein uL13 (154 aa).

It belongs to the universal ribosomal protein uL13 family. As to quaternary structure, part of the 50S ribosomal subunit.

Functionally, this protein is one of the early assembly proteins of the 50S ribosomal subunit, although it is not seen to bind rRNA by itself. It is important during the early stages of 50S assembly. The protein is Large ribosomal subunit protein uL13 of Bartonella tribocorum (strain CIP 105476 / IBS 506).